The primary structure comprises 128 residues: MSLRQAILPACLNNTGDSMAIVTNTPIWVWCVLLCLLYVGSKQSKTRQIKPYKLTFLPLIFLPIVIMSIMQSHHPLIAGFGFIVGLALGLFFRVDNLEGCPFVTKTRATVDTKRKLSSAYPVLIHFYF.

The next 3 helical transmembrane spans lie at 19–41 (MAIV…YVGS), 54–71 (LTFL…SIMQ), and 75–97 (PLIA…VDNL).

It localises to the cell membrane. This is an uncharacterized protein from Pasteurella multocida (strain Pm70).